A 411-amino-acid chain; its full sequence is Secretion apparatus protein BsaZ (411 aa).

The next 4 helical transmembrane spans lie at 28 to 48 (IVALIVIATGALAAPALVDLT), 80 to 100 (IAAPFVLLCAAAGALPSLVQS), 137 to 157 (ALLYVGVFALTVRVFAGLYHA), and 175 to 195 (IVLTVRLVLLFLLCALPVLIL). The tract at residues 341 to 411 (AANRGGPPPE…APARTGDQNA (71 aa)) is disordered. Residues 370-404 (DACADNAFPDDAPPGAAAPNAGSPDGPAPDGGAPA) show a composition bias toward low complexity.

The protein belongs to the type III secretion exporter family.

It is found in the cell membrane. Its function is as follows. Part of the bsa type III secretion system, is involved in the intracellular replication of invading bacteria inside the host cell. Probably necessary for the lysis of the vacuole membrane and escape into the host cell cytoplasm. This is Secretion apparatus protein BsaZ (bsaZ) from Burkholderia pseudomallei (strain 1710b).